We begin with the raw amino-acid sequence, 350 residues long: THUMP domain-containing protein 1 (350 aa).

The span at 1-10 (MATTAQQSPQ) shows a compositional bias: polar residues. Disordered stretches follow at residues 1–42 (MATT…LEPG) and 75–96 (PEKF…DDAE). N-acetylalanine is present on A2. S8, S86, S88, and S119 each carry phosphoserine. The 108-residue stretch at 147-254 (DMYKTKKKKT…KAVCCLSVVK (108 aa)) folds into the THUMP domain. At S270 the chain carries Phosphoserine. The span at 270-292 (SAKDSQPHPKLGNGKEAKLEPDS) shows a compositional bias: basic and acidic residues. Residues 270–350 (SAKDSQPHPK…VPKTNENELS (81 aa)) are disordered.

The protein belongs to the THUMPD1 family. In terms of assembly, interacts with NAT10. Binds tRNA.

Its function is as follows. Functions as a tRNA-binding adapter to mediate NAT10-dependent tRNA acetylation modifying cytidine to N4-acetylcytidine (ac4C). This is THUMP domain-containing protein 1 (Thumpd1) from Mus musculus (Mouse).